The primary structure comprises 433 residues: Serine--tRNA ligase (433 aa).

235 to 237 (TSE) is an L-serine binding site. 266–268 (RSE) is an ATP binding site. Residue Glu289 coordinates L-serine. 353–356 (EISS) serves as a coordination point for ATP. Residue Ser388 coordinates L-serine.

Belongs to the class-II aminoacyl-tRNA synthetase family. Type-1 seryl-tRNA synthetase subfamily. In terms of assembly, homodimer. The tRNA molecule binds across the dimer.

The protein resides in the cytoplasm. The catalysed reaction is tRNA(Ser) + L-serine + ATP = L-seryl-tRNA(Ser) + AMP + diphosphate + H(+). The enzyme catalyses tRNA(Sec) + L-serine + ATP = L-seryl-tRNA(Sec) + AMP + diphosphate + H(+). Its pathway is aminoacyl-tRNA biosynthesis; selenocysteinyl-tRNA(Sec) biosynthesis; L-seryl-tRNA(Sec) from L-serine and tRNA(Sec): step 1/1. Its function is as follows. Catalyzes the attachment of serine to tRNA(Ser). Is also able to aminoacylate tRNA(Sec) with serine, to form the misacylated tRNA L-seryl-tRNA(Sec), which will be further converted into selenocysteinyl-tRNA(Sec). This chain is Serine--tRNA ligase, found in Burkholderia ambifaria (strain MC40-6).